The primary structure comprises 72 residues: MAKEGAIEVEGRVVEPLPNAMFRVELDNGHKVLAHISGKMRQHYIRILPEDRVVVELSPYDLTRGRIVYRYK.

In terms of domain architecture, S1-like spans 1 to 72 (MAKEGAIEVE…TRGRIVYRYK (72 aa)).

This sequence belongs to the IF-1 family. As to quaternary structure, component of the 30S ribosomal translation pre-initiation complex which assembles on the 30S ribosome in the order IF-2 and IF-3, IF-1 and N-formylmethionyl-tRNA(fMet); mRNA recruitment can occur at any time during PIC assembly.

The protein localises to the cytoplasm. In terms of biological role, one of the essential components for the initiation of protein synthesis. Stabilizes the binding of IF-2 and IF-3 on the 30S subunit to which N-formylmethionyl-tRNA(fMet) subsequently binds. Helps modulate mRNA selection, yielding the 30S pre-initiation complex (PIC). Upon addition of the 50S ribosomal subunit IF-1, IF-2 and IF-3 are released leaving the mature 70S translation initiation complex. The sequence is that of Translation initiation factor IF-1 from Corynebacterium efficiens (strain DSM 44549 / YS-314 / AJ 12310 / JCM 11189 / NBRC 100395).